The sequence spans 167 residues: UTP pyrophosphatase (167 aa).

It catalyses the reaction UTP + H2O = UMP + diphosphate + H(+). In terms of biological role, specifically catalyzes the hydrolysis of UTP to UMP and diphosphate in vitro, albeit at apparently slow rate. Shows no activity towards ATP, GTP, CTP, dTTP and ITP as substrates. This Escherichia coli (strain K12) protein is UTP pyrophosphatase.